The following is a 283-amino-acid chain: MATKLQDENTPCLAATPSEPRPTVLVFDSGVGGLSVYDEIRRLLPDLHYIYAFDNVAFPYGEKSETFIVERVVEIATAVQQRYPLSLAVIACNTASTVSLPALREKFAFPVVGVVPAIKPAARLTANGVVGLLATRATVKRPYTHELIARFANECQIAMLGSAELVELAEAKLHGDSVSLEELRRILRPWLRMPEPPDTVVLGCTHFPLLRDELLQVLPEGTRLVDSGAAIARRTAWLLEHEAPDAKSTDANIAYCMAMTPGAEQLLPILQRYGFETLEKLPV.

Substrate is bound by residues 28 to 29 (DS) and 60 to 61 (YG). The active-site Proton donor/acceptor is C92. 93–94 (NT) lines the substrate pocket. Catalysis depends on C204, which acts as the Proton donor/acceptor. A substrate-binding site is contributed by 205 to 206 (TH).

It belongs to the aspartate/glutamate racemases family.

The catalysed reaction is L-glutamate = D-glutamate. It functions in the pathway cell wall biogenesis; peptidoglycan biosynthesis. In terms of biological role, provides the (R)-glutamate required for cell wall biosynthesis. This Salmonella gallinarum (strain 287/91 / NCTC 13346) protein is Glutamate racemase.